The sequence spans 468 residues: 6-phosphogluconate dehydrogenase, decarboxylating (468 aa).

Residues 9–14 (GLAVMG), 32–34 (NRS), 73–75 (VQA), and Asn101 contribute to the NADP(+) site. Substrate contacts are provided by residues Asn101 and 127–129 (SGG). The active-site Proton acceptor is Lys182. Residue 185-186 (HN) participates in substrate binding. Glu189 acts as the Proton donor in catalysis. Substrate is bound by residues Tyr190, Lys259, Arg286, Arg444, and His450.

Belongs to the 6-phosphogluconate dehydrogenase family. In terms of assembly, homodimer.

The catalysed reaction is 6-phospho-D-gluconate + NADP(+) = D-ribulose 5-phosphate + CO2 + NADPH. Its pathway is carbohydrate degradation; pentose phosphate pathway; D-ribulose 5-phosphate from D-glucose 6-phosphate (oxidative stage): step 3/3. Functionally, catalyzes the oxidative decarboxylation of 6-phosphogluconate to ribulose 5-phosphate and CO(2), with concomitant reduction of NADP to NADPH. The polypeptide is 6-phosphogluconate dehydrogenase, decarboxylating (gnd) (Staphylococcus aureus (strain COL)).